A 427-amino-acid chain; its full sequence is FAD-dependent monooxygenase OpS4 (427 aa).

Residues 1–22 form the signal peptide; that stretch reads MGSIREPLHLVVIGGGLAGLSA. Glutamate 37 serves as a coordination point for FAD. The N-linked (GlcNAc...) asparagine glycan is linked to asparagine 54. FAD-binding residues include arginine 112, aspartate 306, and alanine 319.

It belongs to the paxM FAD-dependent monooxygenase family. The cofactor is FAD.

Its pathway is secondary metabolite biosynthesis. FAD-dependent monooxygenase; part of the gene cluster that mediates the biosynthesis of the bibenzoquinone oosporein, a metabolite required for fungal virulence that acts by evading host immunity to facilitate fungal multiplication in insects. The non-reducing polyketide synthase OpS1 produces orsellinic acid by condensing acetyl-CoA with 3 malonyl-CoA units. Orsellinic acid is then hydroxylated to benzenetriol by the hydroxylase OpS4. The intermediate is oxidized either nonenzymatically to 5,5'-dideoxy-oosporein or enzymatically to benzenetetrol by the oxidoreductase OpS7. The latter is further dimerized to oosporein by the catalase OpS5. OpS6 probably functions en route for protecting cells against oxidative stress by scavenging any leaked free radical form of benzenetetrol by activating the thiol group of glutathione. The chain is FAD-dependent monooxygenase OpS4 from Beauveria bassiana (strain ARSEF 2860) (White muscardine disease fungus).